The sequence spans 114 residues: Putative movement protein (114 aa).

A helical transmembrane segment spans residues 27–47 (LIGIILLVTVCLTVLWVCIML). The tract at residues 79-114 (RTPFEATGPERERNWEARRQSTTVNPASQPNTGSVF) is disordered. The span at 86–97 (GPERERNWEARR) shows a compositional bias: basic and acidic residues. Over residues 98 to 114 (QSTTVNPASQPNTGSVF) the composition is skewed to polar residues.

The protein belongs to the nanovirus movement protein family.

The protein localises to the host cell membrane. May transport viral genome to neighboring plant cells directly through plasmosdesmata, without any budding. The movement protein allows efficient cell to cell propagation, by bypassing the host cell wall barrier. In Faba bean necrotic yellows virus (isolate Egyptian EV1-93) (FBNYV), this protein is Putative movement protein (DNA-M).